Reading from the N-terminus, the 435-residue chain is Tektin-4 (435 aa).

Residues 60–69 (DQSERQRHES) are compositionally biased toward basic and acidic residues. Residues 60–96 (DQSERQRHESQQLATETQALAQRTQQDSTRTVGERLQ) are disordered. A compositionally biased stretch (low complexity) spans 70-85 (QQLATETQALAQRTQQ). Coiled-coil stretches lie at residues 102 to 180 (KSEL…LLKR), 310 to 336 (LHKT…DKEA), and 363 to 411 (FRLL…TNSL).

The protein belongs to the tektin family. Microtubule inner protein component of sperm flagellar doublet microtubules. Post-translationally, ubiquitinated, leading to its degradation. Deubiquitinated by USP16, promoting its stability. In terms of tissue distribution, strongly expressed in spermatozoa. Also detected at low levels in pancreas. Expressed in airway epithelial cells.

It is found in the cytoplasm. Its subcellular location is the cytoskeleton. The protein resides in the cilium axoneme. It localises to the flagellum axoneme. In terms of biological role, microtubule inner protein (MIP) part of the dynein-decorated doublet microtubules (DMTs) in cilia and flagellar axoneme. Forms filamentous polymers in the walls of ciliary and flagellar microtubules. Contributes to normal sperm motility. The polypeptide is Tektin-4 (Homo sapiens (Human)).